A 334-amino-acid polypeptide reads, in one-letter code: Heat shock factor 2-binding protein (334 aa).

The interaction with BRME1 stretch occupies residues 14-51; sequence MGTKEEFVKVRKKDLERLTTEVMQIRDFLPRILNGEVL. Residues 49-122 adopt a coiled-coil conformation; that stretch reads EVLESFQKLK…LLQQAEYCTE (74 aa). An interaction with BRCA2 region spans residues 83 to 334; sequence ARLETVQADN…EDLRTLEHNV (252 aa).

Associates with HSF2. The interaction seems to occur between the trimerization domain of HSF2 and the N-terminal hydrophilic region of HSF2BP. Interacts (via C-terminus) with BNC1. Interacts (via N-terminus) with BRCA2 and BRME1; the interactions are direct and allow the formation of a ternary complex. The complex BRME1:HSF2BP:BRCA2 interacts with SPATA22, MEIOB and RAD51. Sumoylated by UBE2I in response to MEKK1-mediated stimuli. In terms of tissue distribution, testis specific. Overexpressed in some tumors.

The protein resides in the cytoplasm. Its subcellular location is the chromosome. Meiotic recombination factor component of recombination bridges involved in meiotic double-strand break repair. Modulates the localization of recombinases DMC1:RAD51 to meiotic double-strand break (DSB) sites through the interaction with BRCA2 and its recruitment during meiotic recombination. Indispensable for the DSB repair, homologous synapsis, and crossover formation that are needed for progression past metaphase I, is essential for spermatogenesis and male fertility. Required for proper recombinase recruitment in female meiosis. Inhibits BNC1 transcriptional activity during spermatogenesis, probably by sequestering it in the cytoplasm. May be involved in modulating HSF2 activation in testis. In Homo sapiens (Human), this protein is Heat shock factor 2-binding protein.